A 548-amino-acid chain; its full sequence is Chaperonin GroEL (548 aa).

Residues 29 to 32 (TLGP), Lys-50, 86 to 90 (DGTTT), Gly-416, and Asp-497 contribute to the ATP site.

Belongs to the chaperonin (HSP60) family. As to quaternary structure, forms a cylinder of 14 subunits composed of two heptameric rings stacked back-to-back. Interacts with the co-chaperonin GroES.

The protein localises to the cytoplasm. The enzyme catalyses ATP + H2O + a folded polypeptide = ADP + phosphate + an unfolded polypeptide.. In terms of biological role, together with its co-chaperonin GroES, plays an essential role in assisting protein folding. The GroEL-GroES system forms a nano-cage that allows encapsulation of the non-native substrate proteins and provides a physical environment optimized to promote and accelerate protein folding. The protein is Chaperonin GroEL of Neorickettsia risticii (Ehrlichia risticii).